A 122-amino-acid chain; its full sequence is MVFVNSRHQGNHYEQMAADYLRRQGLTLVTQNVNYRFGELDLIMRDGNTLVFVEVRYRNNTQHGHAAETVTRTKRARLIKAANCWMLANKMNSHSADFRFDVIAIHQQGQHIDWLKNAITEG.

It belongs to the UPF0102 family.

In Vibrio cholerae serotype O1 (strain M66-2), this protein is UPF0102 protein VCM66_0538.